The sequence spans 185 residues: Ribosome-recycling factor (185 aa).

It belongs to the RRF family.

Its subcellular location is the cytoplasm. In terms of biological role, responsible for the release of ribosomes from messenger RNA at the termination of protein biosynthesis. May increase the efficiency of translation by recycling ribosomes from one round of translation to another. This Haemophilus influenzae (strain 86-028NP) protein is Ribosome-recycling factor.